The chain runs to 155 residues: Ribosome maturation factor RimP (155 aa).

This sequence belongs to the RimP family.

It localises to the cytoplasm. Functionally, required for maturation of 30S ribosomal subunits. The protein is Ribosome maturation factor RimP of Staphylococcus saprophyticus subsp. saprophyticus (strain ATCC 15305 / DSM 20229 / NCIMB 8711 / NCTC 7292 / S-41).